The following is a 727-amino-acid chain: 1,4-alpha-glucan branching enzyme GlgB (727 aa).

D405 functions as the Nucleophile in the catalytic mechanism. E458 (proton donor) is an active-site residue.

The protein belongs to the glycosyl hydrolase 13 family. GlgB subfamily. As to quaternary structure, monomer.

The catalysed reaction is Transfers a segment of a (1-&gt;4)-alpha-D-glucan chain to a primary hydroxy group in a similar glucan chain.. The protein operates within glycan biosynthesis; glycogen biosynthesis. Catalyzes the formation of the alpha-1,6-glucosidic linkages in glycogen by scission of a 1,4-alpha-linked oligosaccharide from growing alpha-1,4-glucan chains and the subsequent attachment of the oligosaccharide to the alpha-1,6 position. This is 1,4-alpha-glucan branching enzyme GlgB from Yersinia pseudotuberculosis serotype O:1b (strain IP 31758).